Here is a 144-residue protein sequence, read N- to C-terminus: Transcriptional regulator SlyA (144 aa).

The region spanning 2–135 is the HTH marR-type domain; it reads ESPLGSDLAR…LLHLIRKLEQ (134 aa). A DNA-binding region (H-T-H motif) is located at residues 49-72; it reads QIQLAKAIGIEQPSLVRTLDQLEE.

It belongs to the SlyA family. As to quaternary structure, homodimer.

Functionally, transcription regulator that can specifically activate or repress expression of target genes. The protein is Transcriptional regulator SlyA of Klebsiella pneumoniae (strain 342).